The sequence spans 547 residues: Chaperonin GroEL (547 aa).

ATP is bound by residues 30-33 (TLGP), lysine 51, 87-91 (DGTTT), glycine 415, 480-482 (NAA), and aspartate 496. The tract at residues 525–547 (KPDDKPAMPPMGGGMGGMGGMDF) is disordered. Residues 535–547 (MGGGMGGMGGMDF) are compositionally biased toward gly residues.

This sequence belongs to the chaperonin (HSP60) family. As to quaternary structure, forms a cylinder of 14 subunits composed of two heptameric rings stacked back-to-back. Interacts with the co-chaperonin GroES.

The protein localises to the cytoplasm. It carries out the reaction ATP + H2O + a folded polypeptide = ADP + phosphate + an unfolded polypeptide.. Together with its co-chaperonin GroES, plays an essential role in assisting protein folding. The GroEL-GroES system forms a nano-cage that allows encapsulation of the non-native substrate proteins and provides a physical environment optimized to promote and accelerate protein folding. The protein is Chaperonin GroEL of Novosphingobium aromaticivorans (strain ATCC 700278 / DSM 12444 / CCUG 56034 / CIP 105152 / NBRC 16084 / F199).